The sequence spans 233 residues: Ion-translocating oxidoreductase complex subunit E (233 aa).

The next 6 membrane-spanning stretches (helical) occupy residues 18–38, 39–59, 69–89, 92–112, 128–148, and 182–202; these read ALVQLLGLCPLLAVSSTATNA, LGLGLATTLVLVCTNTAVSAL, IPIYVMIIASVVSTVQMLINA, FGLYQSLGIFIPLIVTNCIVI, ALDGFAMGMGATCALFVLGAL, and PFLLAMLPPGAFIGLGLLLAG.

This sequence belongs to the NqrDE/RnfAE family. The complex is composed of six subunits: RnfA, RnfB, RnfC, RnfD, RnfE and RnfG.

The protein resides in the cell inner membrane. Functionally, part of a membrane-bound complex that couples electron transfer with translocation of ions across the membrane. In Yersinia pseudotuberculosis serotype O:3 (strain YPIII), this protein is Ion-translocating oxidoreductase complex subunit E.